The primary structure comprises 398 residues: MAAAVTVEEVRRAQRAEGPATVLAIGTATPANCVYQADYPDYYFRITKSEHMVELKEKFKRMCDKSQIRKRYMHLTEEILQENPNMCAYMAPSLDARQDIVVVEVPKLGKAAAQKAIKEWGQPRSRITHLVFCTTSGVDMPGADYQLAKMLGLRPNVNRLMMYQQGCFAGGTVLRVAKDLAENNRGARVLAVCSEITAVTFRGPSESHLDSMVGQALFGDGAAAVIVGSDPDEAVERPLFQMVSASQTILPDSEGAIDGHLREVGLTFHLLKDVPGLISKNIERALGDAFTPLGISDWNSIFWVAHPGGPAILDQVEAKVGLDKERMRATRHVLSEYGNMSSACVLFILDEMRKRSAEDGHATTGEGMDWGVLFGFGPGLTVETVVLHSVPITAGAAA.

58–65 (KFKRMCDK) is a CoA binding site. The active-site Acyl-thioester intermediate is C167. Substrate contacts are provided by residues T200 and 219–220 (GD). Residue A311 participates in CoA binding.

The protein belongs to the thiolase-like superfamily. Chalcone/stilbene synthases family. Homodimer.

The enzyme catalyses (E)-4-coumaroyl-CoA + 3 malonyl-CoA + 3 H(+) = 2',4,4',6'-tetrahydroxychalcone + 3 CO2 + 4 CoA. Its pathway is secondary metabolite biosynthesis; flavonoid biosynthesis. In terms of biological role, the primary product of this enzyme is 4,2',4',6'-tetrahydroxychalcone (also termed naringenin-chalcone or chalcone) which can under specific conditions spontaneously isomerize into naringenin. The chain is Chalcone synthase 1 (CHS1) from Oryza sativa subsp. japonica (Rice).